We begin with the raw amino-acid sequence, 89 residues long: Small ribosomal subunit protein uS19 (89 aa).

The protein belongs to the universal ribosomal protein uS19 family.

Its function is as follows. Protein S19 forms a complex with S13 that binds strongly to the 16S ribosomal RNA. The chain is Small ribosomal subunit protein uS19 from Azobacteroides pseudotrichonymphae genomovar. CFP2.